The sequence spans 141 residues: D-aminoacyl-tRNA deacylase (141 aa).

The Gly-cisPro motif, important for rejection of L-amino acids signature appears at 133–134 (GP).

This sequence belongs to the DTD family. In terms of assembly, homodimer.

It is found in the cytoplasm. It catalyses the reaction glycyl-tRNA(Ala) + H2O = tRNA(Ala) + glycine + H(+). The enzyme catalyses a D-aminoacyl-tRNA + H2O = a tRNA + a D-alpha-amino acid + H(+). In terms of biological role, an aminoacyl-tRNA editing enzyme that deacylates mischarged D-aminoacyl-tRNAs. Also deacylates mischarged glycyl-tRNA(Ala), protecting cells against glycine mischarging by AlaRS. Acts via tRNA-based rather than protein-based catalysis; rejects L-amino acids rather than detecting D-amino acids in the active site. By recycling D-aminoacyl-tRNA to D-amino acids and free tRNA molecules, this enzyme counteracts the toxicity associated with the formation of D-aminoacyl-tRNA entities in vivo and helps enforce protein L-homochirality. In Nautilia profundicola (strain ATCC BAA-1463 / DSM 18972 / AmH), this protein is D-aminoacyl-tRNA deacylase.